Consider the following 282-residue polypeptide: Biotin synthase (282 aa).

The Radical SAM core domain occupies 1–228 (MQEIFLCSIS…NARLMVAGGR (228 aa)). [4Fe-4S] cluster contacts are provided by C17, C21, and C24. [2Fe-2S] cluster-binding residues include C61, C96, C154, and R221.

It belongs to the radical SAM superfamily. Biotin synthase family. Homodimer. [4Fe-4S] cluster serves as cofactor. It depends on [2Fe-2S] cluster as a cofactor.

The enzyme catalyses (4R,5S)-dethiobiotin + (sulfur carrier)-SH + 2 reduced [2Fe-2S]-[ferredoxin] + 2 S-adenosyl-L-methionine = (sulfur carrier)-H + biotin + 2 5'-deoxyadenosine + 2 L-methionine + 2 oxidized [2Fe-2S]-[ferredoxin]. It functions in the pathway cofactor biosynthesis; biotin biosynthesis; biotin from 7,8-diaminononanoate: step 2/2. Its function is as follows. Catalyzes the conversion of dethiobiotin (DTB) to biotin by the insertion of a sulfur atom into dethiobiotin via a radical-based mechanism. In Helicobacter pylori (strain HPAG1), this protein is Biotin synthase.